We begin with the raw amino-acid sequence, 230 residues long: Aspartate and serine-rich protein (230 aa).

3 N-linked (GlcNAc...) asparagine glycosylation sites follow: Asn-17, Asn-132, and Asn-139. Positions 112 to 230 (LNGGATAGGV…DSDSNDTDSD (119 aa)) are disordered. Over residues 126–140 (DTDESSNDTDEDSND) the composition is skewed to acidic residues. The span at 141–161 (SDSKDTDSDSKDTDSDSKDSD) shows a compositional bias: basic and acidic residues. Residues Asn-163 and Asn-170 are each glycosylated (N-linked (GlcNAc...) asparagine). Over residues 173-223 (DSKDTDSDSKDSDSKDTDSDSKDTDSDSKDSDSKDTDSDSKDTDSDSKDSD) the composition is skewed to basic and acidic residues. N-linked (GlcNAc...) asparagine glycosylation occurs at Asn-225.

Component of the acid-insoluble organic matrix of calcified layers of the shell (at protein level).

The protein resides in the secreted. In Lottia gigantea (Giant owl limpet), this protein is Aspartate and serine-rich protein.